Consider the following 254-residue polypeptide: 5'-nucleotidase SurE (254 aa).

A divalent metal cation is bound by residues aspartate 8, aspartate 9, serine 40, and asparagine 93.

Belongs to the SurE nucleotidase family. A divalent metal cation is required as a cofactor.

Its subcellular location is the cytoplasm. It catalyses the reaction a ribonucleoside 5'-phosphate + H2O = a ribonucleoside + phosphate. Its function is as follows. Nucleotidase that shows phosphatase activity on nucleoside 5'-monophosphates. This Methylorubrum populi (strain ATCC BAA-705 / NCIMB 13946 / BJ001) (Methylobacterium populi) protein is 5'-nucleotidase SurE.